The sequence spans 46 residues: Light-harvesting protein B800/850/890 alpha-1 chain (46 aa).

Residues 1 to 12 (MWRLWKLYDPRR) are Cytoplasmic-facing. The chain crosses the membrane as a helical span at residues 13 to 33 (VLIGIFSWLAVLALVIHFILL). His-29 serves as a coordination point for a bacteriochlorophyll. Residues 34 to 46 (STDRFNWVGGAAN) lie on the Periplasmic side of the membrane.

This sequence belongs to the antenna complex alpha subunit family. The core complex is formed by different alpha and beta chains, binding bacteriochlorophyll molecules, and arranged most probably in tetrameric structures disposed around the reaction center. The non-pigmented gamma chains may constitute additional components.

The protein localises to the cell inner membrane. Its function is as follows. Antenna complexes are light-harvesting systems, which transfer the excitation energy to the reaction centers. The chain is Light-harvesting protein B800/850/890 alpha-1 chain from Halorhodospira halophila (strain DSM 244 / SL1) (Ectothiorhodospira halophila (strain DSM 244 / SL1)).